The primary structure comprises 95 residues: Protein TRACHEARY ELEMENT DIFFERENTIATION-RELATED 6 (95 aa).

Over 1-3 (MAT) the chain is Extracellular. Residues 4 to 24 (IFIVFVSFGCVFVLGIAAFVL) traverse the membrane as a helical segment. The Cytoplasmic portion of the chain corresponds to 25 to 95 (CCLIKKWKCS…KLGTASTSKA (71 aa)).

Interacts with the secondary cell wall (SCW)-related cellulose synthase complex. In terms of tissue distribution, accumulates in cells differentiating into tracheary element (TE) which undergo secondary cell wall (SCW) formation.

Its subcellular location is the cell membrane. It is found in the secreted. It localises to the cell wall. Functionally, involved in the secondary cell wall (SCW) formation of vessel elements (e.g. protoxylem and metaxylem), thus promoting tracheary element (TE) differentiation. This Zinnia elegans (Garden zinnia) protein is Protein TRACHEARY ELEMENT DIFFERENTIATION-RELATED 6.